The sequence spans 174 residues: Bifunctional protein PyrR 2 (174 aa).

Substrate contacts are provided by residues 39-40 (TR), 100-108 (DDVLFTGRT), and R133. Residues 96-108 (VILVDDVLFTGRT) carry the PRPP-binding motif.

Belongs to the purine/pyrimidine phosphoribosyltransferase family. PyrR subfamily. Homodimer and homohexamer; in equilibrium.

It catalyses the reaction UMP + diphosphate = 5-phospho-alpha-D-ribose 1-diphosphate + uracil. In terms of biological role, regulates transcriptional attenuation of the pyrimidine nucleotide (pyr) operon by binding in a uridine-dependent manner to specific sites on pyr mRNA. This disrupts an antiterminator hairpin in the RNA and favors formation of a downstream transcription terminator, leading to a reduced expression of downstream genes. Also displays a weak uracil phosphoribosyltransferase activity which is not physiologically significant. The protein is Bifunctional protein PyrR 2 (pyrR2) of Lactiplantibacillus plantarum (strain ATCC BAA-793 / NCIMB 8826 / WCFS1) (Lactobacillus plantarum).